The primary structure comprises 318 residues: Protein-L-histidine N-pros-methyltransferase (318 aa).

Positions 1–18 (MRLLAGWLCLSLASVWLA) are cleaved as a signal peptide. Asparagine 35 carries an N-linked (GlcNAc...) asparagine glycan. S-adenosyl-L-homocysteine is bound by residues glutamate 174, asparagine 210, and tyrosine 295.

Belongs to the METTL9 family.

It is found in the endoplasmic reticulum. The protein localises to the mitochondrion. The enzyme catalyses L-histidyl-[protein] + S-adenosyl-L-methionine = N(pros)-methyl-L-histidyl-[protein] + S-adenosyl-L-homocysteine + H(+). Protein-histidine N-methyltransferase that specifically catalyzes 1-methylhistidine (pros-methylhistidine) methylation of target proteins. Specifically methylates the second His of proteins with a His-x-His (HxH) motif (where 'x' is preferably a small amino acid), while exploiting the first one as a recognition signature. Catalyzes methylation of target proteins such as S100A9, NDUFB3, SLC39A5, SLC39A7, ARMC6 and DNAJB12; 1-methylhistidine modification may affect the binding of zinc and other metals to its target proteins. Constitutes the main methyltransferase for the 1-methylhistidine modification in cell. The chain is Protein-L-histidine N-pros-methyltransferase from Homo sapiens (Human).